A 302-amino-acid chain; its full sequence is Enolase-phosphatase E1 (302 aa).

Basic residues predominate over residues 1 to 10 (MSDSRLRRRQ). Residues 1 to 25 (MSDSRLRRRQGTAGTDNKRRADGPH) form a disordered region. Basic and acidic residues predominate over residues 16–25 (DNKRRADGPH). Mg(2+) is bound by residues Asp40 and Glu42. Residues 183–184 (SS) and Lys217 each bind substrate. Residue Asp242 coordinates Mg(2+).

Belongs to the HAD-like hydrolase superfamily. MasA/MtnC family. Monomer. Mg(2+) is required as a cofactor.

It localises to the cytoplasm. The protein resides in the nucleus. The catalysed reaction is 5-methylsulfanyl-2,3-dioxopentyl phosphate + H2O = 1,2-dihydroxy-5-(methylsulfanyl)pent-1-en-3-one + phosphate. Its pathway is amino-acid biosynthesis; L-methionine biosynthesis via salvage pathway; L-methionine from S-methyl-5-thio-alpha-D-ribose 1-phosphate: step 3/6. It participates in amino-acid biosynthesis; L-methionine biosynthesis via salvage pathway; L-methionine from S-methyl-5-thio-alpha-D-ribose 1-phosphate: step 4/6. Bifunctional enzyme that catalyzes the enolization of 2,3-diketo-5-methylthiopentyl-1-phosphate (DK-MTP-1-P) into the intermediate 2-hydroxy-3-keto-5-methylthiopentenyl-1-phosphate (HK-MTPenyl-1-P), which is then dephosphorylated to form the acireductone 1,2-dihydroxy-3-keto-5-methylthiopentene (DHK-MTPene). This chain is Enolase-phosphatase E1, found in Branchiostoma floridae (Florida lancelet).